A 797-amino-acid polypeptide reads, in one-letter code: Inulosucrase (797 aa).

The N-terminal stretch at 1 to 36 is a signal peptide; sequence MLENKNHKKISLSGKSLLMGTLSTAAIVLSASTANA. A compositionally biased stretch (polar residues) spans 54–64; it reads ASSVNNENNKQ. The segment at 54-176 is disordered; sequence ASSVNNENNK…SVKPAENATK (123 aa). Basic and acidic residues-rich tracts occupy residues 65-75 and 82-95; these read VTEKDSADKST and ANTK…ETTE. Low complexity predominate over residues 130 to 139; that stretch reads DQKTTNAATT. Over residues 140-167 the composition is skewed to basic and acidic residues; it reads DTKKDDVKQVEKKDSVDKTNAEENKDSS. Trp271 is a binding site for substrate. Residue Asp272 is the Nucleophile of the active site. Asn317 is a binding site for Ca(2+). Position 340 (Ser340) interacts with substrate. Ca(2+) is bound at residue Asp419. 424–425 contacts substrate; sequence RD. Ca(2+) contacts are provided by Gln450, Trp487, Asn489, and Asp521. Substrate contacts are provided by residues 522–524 and Arg542; that span reads EIE. Glu524 (proton donor/acceptor) is an active-site residue. Ca(2+) is bound by residues Asp660, Ile662, and Ser667. The segment at 708–766 is disordered; it reads QPVTPIPNVPTTPETPTTPDKPEVPTTPEVPTTPETPTPEAPKNPVKKTSQSKLPKAGD. The segment covering 718–740 has biased composition (low complexity); it reads TTPETPTTPDKPEVPTTPEVPTT. Positions 761-765 match the LPXTG sorting signal motif; the sequence is LPKAG. Pentaglycyl murein peptidoglycan amidated alanine is present on Ala764. Positions 765 to 797 are cleaved as a propeptide — removed by sortase; the sequence is GDKNSFAAVVLGAVSSILGAVGLTGVSKRKRNN.

The protein belongs to the glycosyl hydrolase 68 family. It depends on Ca(2+) as a cofactor.

Its subcellular location is the secreted. It is found in the cell wall. The enzyme catalyses [(2-&gt;1)-beta-D-fructosyl](n) + sucrose = [(2-&gt;1)-beta-D-fructosyl](n+1) + D-glucose. Functionally, fructosyltransferase that catalyzes the polymerization of the fructose moiety of sucrose to produce inulin polymer and inulin oligosaccharides such as 1-kestose and nystose. This Lactobacillus johnsonii (strain CNCM I-12250 / La1 / NCC 533) protein is Inulosucrase.